A 493-amino-acid polypeptide reads, in one-letter code: 6-aminohexanoate-cyclic-dimer hydrolase (493 aa).

Residues Lys-72 and Ser-150 each act as charge relay system in the active site. Residue Ser-174 is the Acyl-ester intermediate of the active site.

This sequence belongs to the amidase family. As to quaternary structure, homodimer.

The catalysed reaction is 1,8-diazacyclotetradecane-2,9-dione + H2O = N-(6-aminohexanoyl)-6-aminohexanoate. The protein operates within xenobiotic degradation; nylon-6 oligomer degradation. Functionally, catalyzes the hydrolysis of 6-aminohexanoic acid cyclic dimer (1,8-diazacyclotetradecane-2,9-dione) to form the linear dimer 6-aminohexanoyl-6-aminohexanoic acid. In Pseudomonas sp. (strain NK87), this protein is 6-aminohexanoate-cyclic-dimer hydrolase (nylA).